Reading from the N-terminus, the 172-residue chain is MRTLVMVACAVSLAACSSPPKPPTVSGRHRIPINSPAAQEELRLQVFPQEPTAQATMWPARPPKQTVSVYFPQDVTVFRPTSAQINQLHTLLWPVPKHINVRGLTDNNCPPPGDTQVARVRALAIYNWLINQGVSASRITISYAPVKDYASNAPLSPGRVLNRRVDIEILRK.

The N-terminal stretch at 1–15 (MRTLVMVACAVSLAA) is a signal peptide. The N-palmitoyl cysteine moiety is linked to residue Cys16. The S-diacylglycerol cysteine moiety is linked to residue Cys16. Residues 58-172 (WPARPPKQTV…RRVDIEILRK (115 aa)) enclose the OmpA-like domain.

The protein resides in the cell outer membrane. Its function is as follows. The VirB system could be required for the establishment of the replication niche in the host. This chain is Type IV secretion system putative outer membrane lipoprotein BRA0058/BS1330_II0058, found in Brucella suis biovar 1 (strain 1330).